Here is an 858-residue protein sequence, read N- to C-terminus: DNA mismatch repair protein MutS (858 aa).

613-620 (GPNMAGKS) is a binding site for ATP.

Belongs to the DNA mismatch repair MutS family.

Its function is as follows. This protein is involved in the repair of mismatches in DNA. It is possible that it carries out the mismatch recognition step. This protein has a weak ATPase activity. This is DNA mismatch repair protein MutS from Dehalococcoides mccartyi (strain ATCC BAA-2100 / JCM 16839 / KCTC 5957 / BAV1).